Reading from the N-terminus, the 388-residue chain is Autophagy-related protein 21 (388 aa).

2 WD repeats span residues 179-219 and 224-263; these read CHRS…KVHE and SYTAQISCLSFNVDATVLCCSSNTGTVHFFRLDDVDRRRS. Residues 220-224 carry the L/FRRG motif motif; the sequence is FRRGS.

It belongs to the WD repeat PROPPIN family.

Its subcellular location is the cytoplasm. It is found in the membrane. The protein resides in the vacuole membrane. Its function is as follows. Involved in peroxisome sequestration to the vacuole during macropexophagy. Also required for microautophagy. The protein is Autophagy-related protein 21 (ATG21) of Pichia angusta (Yeast).